Here is a 173-residue protein sequence, read N- to C-terminus: Shikimate kinase 1 (173 aa).

An ATP-binding site is contributed by 14-19; that stretch reads GAGKST. Ser-18 is a Mg(2+) binding site. Substrate contacts are provided by Asp-36, Arg-60, and Gly-82. Residue Arg-120 participates in ATP binding. Arg-140 provides a ligand contact to substrate. Position 157 (Gln-157) interacts with ATP.

It belongs to the shikimate kinase family. In terms of assembly, monomer. Requires Mg(2+) as cofactor.

It is found in the cytoplasm. It carries out the reaction shikimate + ATP = 3-phosphoshikimate + ADP + H(+). The protein operates within metabolic intermediate biosynthesis; chorismate biosynthesis; chorismate from D-erythrose 4-phosphate and phosphoenolpyruvate: step 5/7. Functionally, catalyzes the specific phosphorylation of the 3-hydroxyl group of shikimic acid using ATP as a cosubstrate. The chain is Shikimate kinase 1 from Salmonella typhimurium (strain LT2 / SGSC1412 / ATCC 700720).